The following is a 362-amino-acid chain: Chorismate synthase (362 aa).

Arg46 provides a ligand contact to NADP(+). Residues 122–124, 238–239, Gly278, 293–297, and Arg319 each bind FMN; these read RSS, NA, and KPTPS.

It belongs to the chorismate synthase family. As to quaternary structure, homotetramer. The cofactor is FMNH2.

It catalyses the reaction 5-O-(1-carboxyvinyl)-3-phosphoshikimate = chorismate + phosphate. It functions in the pathway metabolic intermediate biosynthesis; chorismate biosynthesis; chorismate from D-erythrose 4-phosphate and phosphoenolpyruvate: step 7/7. In terms of biological role, catalyzes the anti-1,4-elimination of the C-3 phosphate and the C-6 proR hydrogen from 5-enolpyruvylshikimate-3-phosphate (EPSP) to yield chorismate, which is the branch point compound that serves as the starting substrate for the three terminal pathways of aromatic amino acid biosynthesis. This reaction introduces a second double bond into the aromatic ring system. The chain is Chorismate synthase from Campylobacter jejuni (strain RM1221).